Reading from the N-terminus, the 269-residue chain is 4-hydroxy-tetrahydrodipicolinate reductase (269 aa).

Residues 8–13 and E34 contribute to the NAD(+) site; that span reads GAAGRM. Position 35 (R35) interacts with NADP(+). NAD(+) is bound by residues 98-100 and 122-125; these read GTT and APNY. Catalysis depends on H155, which acts as the Proton donor/acceptor. Residue H156 coordinates (S)-2,3,4,5-tetrahydrodipicolinate. K159 (proton donor) is an active-site residue. A (S)-2,3,4,5-tetrahydrodipicolinate-binding site is contributed by 165–166; that stretch reads GT.

Belongs to the DapB family.

It is found in the cytoplasm. It carries out the reaction (S)-2,3,4,5-tetrahydrodipicolinate + NAD(+) + H2O = (2S,4S)-4-hydroxy-2,3,4,5-tetrahydrodipicolinate + NADH + H(+). The enzyme catalyses (S)-2,3,4,5-tetrahydrodipicolinate + NADP(+) + H2O = (2S,4S)-4-hydroxy-2,3,4,5-tetrahydrodipicolinate + NADPH + H(+). It functions in the pathway amino-acid biosynthesis; L-lysine biosynthesis via DAP pathway; (S)-tetrahydrodipicolinate from L-aspartate: step 4/4. Catalyzes the conversion of 4-hydroxy-tetrahydrodipicolinate (HTPA) to tetrahydrodipicolinate. The protein is 4-hydroxy-tetrahydrodipicolinate reductase of Vibrio cholerae serotype O1 (strain ATCC 39541 / Classical Ogawa 395 / O395).